We begin with the raw amino-acid sequence, 65 residues long: MAKCAICDKGAHFGKVVSHSRSQVSGRSNKMWKSNVKSVRIKVNGGTQKMYVCTSCLRDGKVERA.

Belongs to the bacterial ribosomal protein bL28 family.

In Lachnoclostridium phytofermentans (strain ATCC 700394 / DSM 18823 / ISDg) (Clostridium phytofermentans), this protein is Large ribosomal subunit protein bL28.